Reading from the N-terminus, the 376-residue chain is MSCVDCRFAPACVTVRTRNLCENCFIRFLQTKVLRRMERYRLRNAPKDRQRKLILPLSYGVSSLALLHIVSSLLLKQRTTGQKRTAFDLHVLIVDPVSLHPSKGAAASGRLAKIKEAYPDNTYSEVPLRSIFDYDPDIRGDISQHTGIPLGSNPSRSDEEILNLFRASFSTATARADIDGILLRRLIVAFAKSHKCDGILWGDSDSRLAAKTLANVAKGRGSSLVWNVCEGMSPWDIYFNFPLRDLYKSELEVYASYALRDLQQIIDQDPRNFEDLSNRHMSIEDLMSQYVLTQGAKYPGVMANIVRTVDKLTTPGVENAKMCILCRVPAGENLNAASGSQMDIGSNGETTTVPRSTCYGCMRTLLDMKAPTSNSG.

This sequence belongs to the CTU2/NCS2 family.

The protein resides in the cytoplasm. The protein operates within tRNA modification; 5-methoxycarbonylmethyl-2-thiouridine-tRNA biosynthesis. Functionally, plays a central role in 2-thiolation of mcm(5)S(2)U at tRNA wobble positions of tRNA(Lys), tRNA(Glu) and tRNA(Gln). May act by forming a heterodimer with NCS6 that ligates sulfur from thiocarboxylated URM1 onto the uridine of tRNAs at wobble position. Prior mcm(5) tRNA modification by the elongator complex is required for 2-thiolation. May also be involved in protein urmylation. The chain is Cytoplasmic tRNA 2-thiolation protein 2 from Coccidioides immitis (strain RS) (Valley fever fungus).